Here is a 546-residue protein sequence, read N- to C-terminus: Chaperonin GroEL (546 aa).

ATP contacts are provided by residues 30-33 (TLGP), K51, 87-91 (DGTTT), G415, and D497. The segment at 527 to 546 (PKKDSPAPAMPGGGMGGMDF) is disordered. Positions 537–546 (PGGGMGGMDF) are enriched in gly residues.

It belongs to the chaperonin (HSP60) family. As to quaternary structure, forms a cylinder of 14 subunits composed of two heptameric rings stacked back-to-back. Interacts with the co-chaperonin GroES.

The protein localises to the cytoplasm. It catalyses the reaction ATP + H2O + a folded polypeptide = ADP + phosphate + an unfolded polypeptide.. Functionally, together with its co-chaperonin GroES, plays an essential role in assisting protein folding. The GroEL-GroES system forms a nano-cage that allows encapsulation of the non-native substrate proteins and provides a physical environment optimized to promote and accelerate protein folding. The chain is Chaperonin GroEL from Methylorubrum populi (strain ATCC BAA-705 / NCIMB 13946 / BJ001) (Methylobacterium populi).